The chain runs to 231 residues: Large ribosomal subunit protein uL3 (231 aa).

Glutamine 151 carries the post-translational modification N5-methylglutamine.

Belongs to the universal ribosomal protein uL3 family. In terms of assembly, part of the 50S ribosomal subunit. Forms a cluster with proteins L14 and L19. Methylated by PrmB.

Its function is as follows. One of the primary rRNA binding proteins, it binds directly near the 3'-end of the 23S rRNA, where it nucleates assembly of the 50S subunit. This Granulibacter bethesdensis (strain ATCC BAA-1260 / CGDNIH1) protein is Large ribosomal subunit protein uL3.